We begin with the raw amino-acid sequence, 298 residues long: Elongation factor Ts (298 aa).

Residues threonine 80–valine 83 form an involved in Mg(2+) ion dislocation from EF-Tu region.

The protein belongs to the EF-Ts family.

The protein localises to the cytoplasm. Functionally, associates with the EF-Tu.GDP complex and induces the exchange of GDP to GTP. It remains bound to the aminoacyl-tRNA.EF-Tu.GTP complex up to the GTP hydrolysis stage on the ribosome. The sequence is that of Elongation factor Ts from Acidovorax sp. (strain JS42).